A 254-amino-acid chain; its full sequence is ATP-dependent L-serine kinase SbnI (254 aa).

Glutamate 20 is an active-site residue. Position 33 (serine 33) interacts with ADP. Isoleucine 57 serves as a coordination point for O-phospho-L-serine. The ADP site is built by aspartate 58, glycine 59, histidine 61, and arginine 62. Glycine 59 and histidine 61 together coordinate O-phospho-L-serine. Residues tryptophan 98 and arginine 229 each contribute to the O-phospho-L-serine site.

In terms of assembly, forms dimers and tetramers in solution. Predominantly forms dimers. Dimerization/oligomerization is not essential for kinase activity.

The catalysed reaction is L-serine + ATP = O-phospho-L-serine + ADP + H(+). Its pathway is siderophore biosynthesis. Its activity is regulated as follows. Binds heme and heme binding inhibits DNA binding. Functionally, free serine kinase that uses ATP to phosphorylate L-serine to yield O-phospho-L-serine and ADP. O-phospho-L-serine serves as a substrate for SbnA and is a precursor for staphyloferrin B biosynthesis. Is also a DNA-binding regulatory protein that senses heme to control gene expression for siderophore biosynthesis. Binds to DNA within the sbnC coding region and is required for expression of genes in the sbn operon from sbnD onward. The chain is ATP-dependent L-serine kinase SbnI from Staphylococcus aureus (strain NCTC 8325 / PS 47).